The chain runs to 159 residues: UPF0178 protein AZC_4000 (159 aa).

This sequence belongs to the UPF0178 family.

This is UPF0178 protein AZC_4000 from Azorhizobium caulinodans (strain ATCC 43989 / DSM 5975 / JCM 20966 / LMG 6465 / NBRC 14845 / NCIMB 13405 / ORS 571).